The sequence spans 318 residues: uncharacterized protein (318 aa).

This is an uncharacterized protein from Schizosaccharomyces pombe (strain 972 / ATCC 24843) (Fission yeast).